A 143-amino-acid polypeptide reads, in one-letter code: Small ribosomal subunit protein eS12 (143 aa).

Residues K85, K95, and K114 each participate in a glycyl lysine isopeptide (Lys-Gly) (interchain with G-Cter in ubiquitin) cross-link.

This sequence belongs to the eukaryotic ribosomal protein eS12 family. Component of the small ribosomal subunit (SSU). Mature yeast ribosomes consist of a small (40S) and a large (60S) subunit. The 40S small subunit contains 1 molecule of ribosomal RNA (18S rRNA) and 33 different proteins (encoded by 57 genes). The large 60S subunit contains 3 rRNA molecules (25S, 5.8S and 5S rRNA) and 46 different proteins (encoded by 81 genes).

It is found in the cytoplasm. In terms of biological role, component of the ribosome, a large ribonucleoprotein complex responsible for the synthesis of proteins in the cell. The small ribosomal subunit (SSU) binds messenger RNAs (mRNAs) and translates the encoded message by selecting cognate aminoacyl-transfer RNA (tRNA) molecules. The large subunit (LSU) contains the ribosomal catalytic site termed the peptidyl transferase center (PTC), which catalyzes the formation of peptide bonds, thereby polymerizing the amino acids delivered by tRNAs into a polypeptide chain. The nascent polypeptides leave the ribosome through a tunnel in the LSU and interact with protein factors that function in enzymatic processing, targeting, and the membrane insertion of nascent chains at the exit of the ribosomal tunnel. In Saccharomyces cerevisiae (strain ATCC 204508 / S288c) (Baker's yeast), this protein is Small ribosomal subunit protein eS12.